The primary structure comprises 393 residues: Formate-dependent phosphoribosylglycinamide formyltransferase (393 aa).

N(1)-(5-phospho-beta-D-ribosyl)glycinamide-binding positions include 22-23 and Glu82; that span reads EL. ATP is bound by residues Arg114, Lys155, 160–165, 195–198, and Glu203; these read SSGKGQ and EGFI. The ATP-grasp domain occupies 119–308; the sequence is RLAAEELDLP…QFALHARAIL (190 aa). Glu267 and Glu279 together coordinate Mg(2+). Residues Asp286, Lys356, and 363 to 364 each bind N(1)-(5-phospho-beta-D-ribosyl)glycinamide; that span reads RR.

The protein belongs to the PurK/PurT family. In terms of assembly, homodimer.

It catalyses the reaction N(1)-(5-phospho-beta-D-ribosyl)glycinamide + formate + ATP = N(2)-formyl-N(1)-(5-phospho-beta-D-ribosyl)glycinamide + ADP + phosphate + H(+). The protein operates within purine metabolism; IMP biosynthesis via de novo pathway; N(2)-formyl-N(1)-(5-phospho-D-ribosyl)glycinamide from N(1)-(5-phospho-D-ribosyl)glycinamide (formate route): step 1/1. In terms of biological role, involved in the de novo purine biosynthesis. Catalyzes the transfer of formate to 5-phospho-ribosyl-glycinamide (GAR), producing 5-phospho-ribosyl-N-formylglycinamide (FGAR). Formate is provided by PurU via hydrolysis of 10-formyl-tetrahydrofolate. The polypeptide is Formate-dependent phosphoribosylglycinamide formyltransferase (Pseudomonas putida (strain GB-1)).